Reading from the N-terminus, the 154-residue chain is Xanthine-guanine phosphoribosyltransferase (154 aa).

Residues 37–38, R69, and 88–96 each bind 5-phospho-alpha-D-ribose 1-diphosphate; these read RG and EDLVDSGDT. GMP is bound at residue R69. D89 contacts Mg(2+). The guanine site is built by D92 and I135. Positions 92 and 135 each coordinate xanthine. GMP is bound by residues 92–96 and 134–135; these read DSGDT and WI.

It belongs to the purine/pyrimidine phosphoribosyltransferase family. XGPT subfamily. In terms of assembly, homotetramer. It depends on Mg(2+) as a cofactor.

It is found in the cell inner membrane. The catalysed reaction is GMP + diphosphate = guanine + 5-phospho-alpha-D-ribose 1-diphosphate. It catalyses the reaction XMP + diphosphate = xanthine + 5-phospho-alpha-D-ribose 1-diphosphate. The enzyme catalyses IMP + diphosphate = hypoxanthine + 5-phospho-alpha-D-ribose 1-diphosphate. Its pathway is purine metabolism; GMP biosynthesis via salvage pathway; GMP from guanine: step 1/1. It functions in the pathway purine metabolism; XMP biosynthesis via salvage pathway; XMP from xanthine: step 1/1. Functionally, purine salvage pathway enzyme that catalyzes the transfer of the ribosyl-5-phosphate group from 5-phospho-alpha-D-ribose 1-diphosphate (PRPP) to the N9 position of the 6-oxopurines guanine and xanthine to form the corresponding ribonucleotides GMP (guanosine 5'-monophosphate) and XMP (xanthosine 5'-monophosphate), with the release of PPi. To a lesser extent, also acts on hypoxanthine. The polypeptide is Xanthine-guanine phosphoribosyltransferase (Vibrio vulnificus (strain CMCP6)).